The sequence spans 223 residues: Uracil-DNA glycosylase (223 aa).

Catalysis depends on aspartate 66, which acts as the Proton acceptor.

Belongs to the uracil-DNA glycosylase (UDG) superfamily. UNG family.

The protein localises to the cytoplasm. It carries out the reaction Hydrolyzes single-stranded DNA or mismatched double-stranded DNA and polynucleotides, releasing free uracil.. Excises uracil residues from the DNA which can arise as a result of misincorporation of dUMP residues by DNA polymerase or due to deamination of cytosine. The protein is Uracil-DNA glycosylase of Sulfurimonas denitrificans (strain ATCC 33889 / DSM 1251) (Thiomicrospira denitrificans (strain ATCC 33889 / DSM 1251)).